A 317-amino-acid polypeptide reads, in one-letter code: Ribose-phosphate pyrophosphokinase (317 aa).

Residues 43 to 45 (DGE) and 102 to 103 (RQ) each bind ATP. Residues H136 and D175 each contribute to the Mg(2+) site. K198 is a catalytic residue. Residues R200, D224, and 228–232 (DTAGT) each bind D-ribose 5-phosphate.

This sequence belongs to the ribose-phosphate pyrophosphokinase family. Class I subfamily. In terms of assembly, homohexamer. The cofactor is Mg(2+).

It localises to the cytoplasm. The catalysed reaction is D-ribose 5-phosphate + ATP = 5-phospho-alpha-D-ribose 1-diphosphate + AMP + H(+). It participates in metabolic intermediate biosynthesis; 5-phospho-alpha-D-ribose 1-diphosphate biosynthesis; 5-phospho-alpha-D-ribose 1-diphosphate from D-ribose 5-phosphate (route I): step 1/1. Involved in the biosynthesis of the central metabolite phospho-alpha-D-ribosyl-1-pyrophosphate (PRPP) via the transfer of pyrophosphoryl group from ATP to 1-hydroxyl of ribose-5-phosphate (Rib-5-P). The chain is Ribose-phosphate pyrophosphokinase from Corynebacterium ammoniagenes (Brevibacterium ammoniagenes).